Here is a 469-residue protein sequence, read N- to C-terminus: MKAMEGKIIQVLGPVVDVEFESYLPAIFEALDINFEVNGVQKSLVLEVAAHLGGNRVRAIAMDMTEGLVRNQVVKARGKMIEVPVGEEVLGRIFNVVGESIDNLEPLKPSLTWPIHRKAPSFEQQSTKTEMFETGIKVIDLLAPYSKGGKVGLFGGAGVGKTVIIMELIHNVAYKHNGYSVFAGVGERTREGNDLYFEMKEGGVLDKVALCYGQMNEPPGARNRIAFTGLTMAEYFRDEKGLDVLMFIDNIFRYAQSGAEMSALLGRIPSAVGYQPTLAGEMGKLQERIASTKNGSITSVQAVYVPADDLTDPAPASVFAHLDATTVLNRKIAEKGIYPAVDPLDSTSRILSPQMIGEKHYEVATGIQQVLQKYKDLQDIIAILGLDELSEEDKKTVERARKIEKFLSQPFFVAEVFTGSPGKYVTLQETLEGFGGILEGKYDHIPENAFYMVGSIQEVLEKAKNMKNS.

Residue 155-162 (GGAGVGKT) participates in ATP binding.

This sequence belongs to the ATPase alpha/beta chains family. F-type ATPases have 2 components, CF(1) - the catalytic core - and CF(0) - the membrane proton channel. CF(1) has five subunits: alpha(3), beta(3), gamma(1), delta(1), epsilon(1). CF(0) has three main subunits: a(1), b(2) and c(9-12). The alpha and beta chains form an alternating ring which encloses part of the gamma chain. CF(1) is attached to CF(0) by a central stalk formed by the gamma and epsilon chains, while a peripheral stalk is formed by the delta and b chains.

It localises to the cell inner membrane. It catalyses the reaction ATP + H2O + 4 H(+)(in) = ADP + phosphate + 5 H(+)(out). Produces ATP from ADP in the presence of a proton gradient across the membrane. The catalytic sites are hosted primarily by the beta subunits. The protein is ATP synthase subunit beta of Helicobacter pylori (strain P12).